Consider the following 88-residue polypeptide: Arminin 7965 (88 aa).

A signal peptide spans 1 to 18 (MKTVFAILFLTFIAFTYA). Residues 19-57 (KSYEDVKEEIKNEVEREIFEDLEEESDVLDSNVRELNDA) constitute a propeptide that is removed on maturation. A85 is subject to Alanine amide.

Belongs to the arminin family. In terms of tissue distribution, expressed in entodermal epithelium along the body column.

It localises to the secreted. The protein resides in the target cell membrane. Antimicrobial peptide with a broad-spectrum antimicrobial activity. Keeps its antibacterial activity under a wide range of salt concentrations that mimic physiological conditions of human blood, which is surprising, since Hydra is an obligate freshwater animal with nearly no salt tolerance. Does not affect red blood cells. This Hydra vulgaris (Hydra) protein is Arminin 7965.